Reading from the N-terminus, the 447-residue chain is Argininosuccinate synthase (447 aa).

ATP is bound by residues 17 to 25 (AFSGGLDTS) and A43. Y99 provides a ligand contact to L-citrulline. 2 residues coordinate ATP: G129 and T131. T131, N135, and D136 together coordinate L-aspartate. N135 is an L-citrulline binding site. D136 lines the ATP pocket. Positions 139 and 192 each coordinate L-citrulline. D194 is a binding site for ATP. L-citrulline is bound by residues T201, E203, and E280.

This sequence belongs to the argininosuccinate synthase family. Type 2 subfamily. Homotetramer.

Its subcellular location is the cytoplasm. The catalysed reaction is L-citrulline + L-aspartate + ATP = 2-(N(omega)-L-arginino)succinate + AMP + diphosphate + H(+). The protein operates within amino-acid biosynthesis; L-arginine biosynthesis; L-arginine from L-ornithine and carbamoyl phosphate: step 2/3. The protein is Argininosuccinate synthase of Klebsiella pneumoniae (strain 342).